We begin with the raw amino-acid sequence, 484 residues long: MALIQNPNMKHAPFLRNRSPQQTLFIPYTLSLPISYQNPKRLKTANSSSSSSLLAPVILNSPVASSSPPPIYCAPKFPCSSGAATVPLSRVWREIQGCNNWKDLIEPLNPLLQQEITRYGNLVSTCYKAFDLDPNSKRYLNCKYGKQTLLKETEIDQPEDYQVTKYIYATPDININISPIQNEMNRRARWVGYVAASSDDSVKRLGRRDIVVTFRGTVTNPEWLANFMSSLTPARFHPHNPRLDVKVESGFLSLYTSDESESKFGLESCRQQLLSEISRLMNKYKGEEMSITLAGHSMGSSLAQLLAYDIAELGLNRRIGKGDIPVTVFSFAGPRVGNLEFKKRCEELGVKVLRITNVNDPVTKLPGVLFNENFRVLGGFYELPWSCSCYVHVGVELTLDFFDVQNISCVHDLQTYIDLLNQRRTNSRSVDSDEDEDSDNVALEFLKTNGEKMMFLKRQRMMYWSNAVDLLFSFSNHMSYCNIF.

The N-terminal 63 residues, 1–63 (MALIQNPNMK…LAPVILNSPV (63 aa)), are a transit peptide targeting the chloroplast. A GXSXG motif is present at residues 295–299 (GHSMG). Residue serine 297 is the Acyl-ester intermediate of the active site. Residues aspartate 360 and histidine 411 each act as charge relay system in the active site.

It belongs to the AB hydrolase superfamily. Lipase family. In terms of tissue distribution, ubiquitous. Highest expression in flowers and leaves.

It localises to the plastid. It is found in the chloroplast. The protein localises to the plastoglobule. The enzyme catalyses a 1,2-diacyl-3-O-[alpha-D-galactosyl-(1-&gt;6)-beta-D-galactosyl]-sn-glycerol + H2O = acyl-3-O-[alpha-D-galactosyl-(1-&gt;6)-beta-D-galactosyl]-sn-glycerol + a fatty acid + H(+). It catalyses the reaction a 1,2-diacyl-3-O-(beta-D-galactosyl)-sn-glycerol + H2O = an acyl-3-O-(beta-D-galactosyl)-sn-glycerol + a fatty acid + H(+). In terms of biological role, acylhydrolase that catalyzes the hydrolysis of phosphatidylcholine at the sn-1 position. Has a strong galactolipase activity toward monogalactosyldiacylglycerol (MGDG) and digalactosyldiacylglycerol (DGDG). Low triacylglycerol (TAG) lipase activity. Plays a role in plant growth and in leaf senescence. The chain is Phospholipase A1-Ialpha2, chloroplastic from Arabidopsis thaliana (Mouse-ear cress).